The primary structure comprises 311 residues: Probable manganese-dependent inorganic pyrophosphatase (311 aa).

Residues His-9, Asp-13, Asp-15, Asp-77, His-99, and Asp-151 each coordinate Mn(2+).

This sequence belongs to the PPase class C family. Mn(2+) is required as a cofactor.

The protein localises to the cytoplasm. It carries out the reaction diphosphate + H2O = 2 phosphate + H(+). The sequence is that of Probable manganese-dependent inorganic pyrophosphatase from Streptococcus suis (strain 98HAH33).